A 690-amino-acid chain; its full sequence is Ligand of Numb protein X 2 (690 aa).

The RING-type zinc finger occupies 50-88; the sequence is CHICLQPLLQPLDTPCGHTFCYKCLRNFLQEKDFCPLDR. Residues 198-224 form a disordered region; the sequence is STWSEEPGLDNPAFEESAGADTTQQPL. The NPXY motif motif lies at 208 to 211; the sequence is NPAF. PDZ domains follow at residues 233–318, 339–422, 468–554, and 600–688; these read TIEI…LRER, QVAL…ARPG, HITV…KALE, and DIVL…WPGS. The segment at 418 to 455 is disordered; the sequence is IARPGKPQPGNTIREAGNHSSSSQHHTPPPYYSRPSSH.

As to quaternary structure, interacts with the phosphotyrosine interaction domain of NUMB.

The chain is Ligand of Numb protein X 2 (LNX2) from Homo sapiens (Human).